Reading from the N-terminus, the 214-residue chain is MRVRYKPWAEDYLKDHPELVDMDGQHAGKMTEWFDKTQPIHIEIGSGMGQFITTLAAQNPHINYISMEREKSIVYKVLDKVKEMSLTNLKIICNDAIELNEYFKDGEVSRIYLNFSDPWPKNRHAKRRLTYHTFLALYQQILNDEGDLHFKTDNRGLFAYSLESMSQFGMYFTKINLNLHQEDDGSNILTEYEKKFSNKGSRIYRMEAKFHSQK.

Residues glutamate 43, glutamate 68, aspartate 95, and aspartate 117 each coordinate S-adenosyl-L-methionine. The active site involves aspartate 117. Residues lysine 121, aspartate 153, and 190-193 (TEYE) each bind substrate.

It belongs to the class I-like SAM-binding methyltransferase superfamily. TrmB family.

The catalysed reaction is guanosine(46) in tRNA + S-adenosyl-L-methionine = N(7)-methylguanosine(46) in tRNA + S-adenosyl-L-homocysteine. It functions in the pathway tRNA modification; N(7)-methylguanine-tRNA biosynthesis. Catalyzes the formation of N(7)-methylguanine at position 46 (m7G46) in tRNA. The chain is tRNA (guanine-N(7)-)-methyltransferase from Staphylococcus aureus (strain MSSA476).